Consider the following 240-residue polypeptide: MSDSSIKMPPVFGKLLLATQAHLGGVKVTKPMKKYIYGERQDKVSVFDLKKTWDKFILAARAFCGLNYGDDVTVISCKTFGKKPVLKFAETTGAKSYTGRFIPGSFTNTTIRNSCEPRLIIVSDPIVDKQAIEEAAKVNCPTIAFCNTDCDLKYVDIAIPLNNRSPKAIGASFFILSRIIRYIKFGTPMDQDIKEVELFFYRDPIELEKLQEDQNEDNYNEIFNKFSNANEDEFGKIIYK.

Belongs to the universal ribosomal protein uS2 family. As to quaternary structure, component of the small ribosomal subunit. Mature ribosomes consist of a small (40S) and a large (60S) subunit. The 40S subunit contains about 33 different proteins and 1 molecule of RNA (18S). The 60S subunit contains about 49 different proteins and 3 molecules of RNA (25S, 5.8S and 5S). Interacts with RPS21.

It localises to the cytoplasm. Its function is as follows. Required for the assembly and/or stability of the 40S ribosomal subunit. Required for the processing of the 20S rRNA-precursor to mature 18S rRNA in a late step of the maturation of 40S ribosomal subunits. The chain is Small ribosomal subunit protein uS2 from Enterocytozoon bieneusi (strain H348) (Microsporidian parasite).